Reading from the N-terminus, the 131-residue chain is Cystatin J (131 aa).

Residues 1–18 form the signal peptide; sequence MHLYLCVLVCLSIGMANC. The 75-residue stretch at 35–109 folds into the Cystatin domain; it reads DEILLTGVEF…RMNLPTKCSF (75 aa). A Secondary area of contact motif is present at residues 68 to 72; that stretch reads QVVAG. 2 disulfide bridges follow: Cys86–Cys97 and Cys107–Cys128.

This sequence belongs to the cystatin family.

The protein localises to the secreted. It localises to the nematocyst. Its function is as follows. This recombinant protein inhibits the C1 cysteine protease papain (Ki is below 0.5 nM). The polypeptide is Cystatin J (Cyanea capillata (Lion's mane jellyfish)).